We begin with the raw amino-acid sequence, 240 residues long: Uridylate kinase (240 aa).

Residue 13–16 coordinates ATP; the sequence is KASG. Residues 21–26 form an involved in allosteric activation by GTP region; the sequence is GSQGFG. Gly-55 is a binding site for UMP. Gly-56 and Arg-60 together coordinate ATP. UMP contacts are provided by residues Asp-75 and 136 to 143; that span reads TGNPFFTT. Positions 163, 164, 169, and 172 each coordinate ATP.

The protein belongs to the UMP kinase family. As to quaternary structure, homohexamer.

Its subcellular location is the cytoplasm. The enzyme catalyses UMP + ATP = UDP + ADP. The protein operates within pyrimidine metabolism; CTP biosynthesis via de novo pathway; UDP from UMP (UMPK route): step 1/1. With respect to regulation, allosterically activated by GTP. Inhibited by UTP. Catalyzes the reversible phosphorylation of UMP to UDP. The polypeptide is Uridylate kinase (Brucella abortus biovar 1 (strain 9-941)).